The primary structure comprises 478 residues: Phosphatidylinositol 4-kinase type 2-alpha (478 aa).

Methionine 1 carries the N-acetylmethionine modification. The disordered stretch occupies residues 1–57 (MDETSPLVSPERAQPPEYTFPSVSGAHFPQVPGGAVRVAAAGSGPSPPCSPGHDRER). Phosphoserine occurs at positions 5, 9, 43, 46, and 50. Over residues 31 to 44 (VPGGAVRVAAAGSG) the composition is skewed to low complexity. Positions 123 to 452 (SIYPERIYQG…VQMPPVIVET (330 aa)) constitute a PI3K/PI4K catalytic domain. Residues 129 to 135 (IYQGSSG) form a G-loop region. Residues 130–136 (YQGSSGS) and lysine 151 contribute to the ATP site. The tract at residues 156-158 (EPY) is important for substrate binding. Residues 164–177 (KWTKWLQKLCCPCC) are important for interaction with membranes. S-palmitoyl cysteine attachment occurs at residues cysteine 173, cysteine 174, cysteine 176, and cysteine 177. 260–263 (QLFV) lines the ATP pocket. The important for interaction with membranes stretch occupies residues 267 to 275 (KDADYWLRR). The interval 304–312 (RNTDRGNDN) is catalytic loop. Positions 343–363 (AIDNGLAFPLKHPDSWRAYPF) are activation loop. Aspartate 345 is an ATP binding site. Residues 358-367 (WRAYPFYWAW) are important for interaction with membranes. Residue serine 461 is modified to Phosphoserine.

This sequence belongs to the PI3/PI4-kinase family. Type II PI4K subfamily. Associates with the BLOC-1 and the AP-3 complexes; the BLOC-1 complex is required for optimal binding of PI4K2A to the AP-3 complex. Interacts with BLOC1S5 and DTNBP1. Interacts with FOS; this interaction may enhance phosphatidylinositol phosphorylation activity. Interacts with ITCH. Interacts with ATG9A. Ubiquitinated by ITCH; this does not lead to proteasomal degradation. In terms of processing, palmitoylated. Palmitoylated by ZDHHC3 and ZDHHC7 in the CCPCC motif. Palmitoylation is cholesterol-dependent, and required for TGN localization. In terms of tissue distribution, detected in adult brain, especially in neurons in the cerebellum, brain cortex, dorsal root ganglion and spinal cord (at protein level).

It is found in the golgi apparatus. The protein localises to the trans-Golgi network membrane. Its subcellular location is the membrane raft. It localises to the endosome. The protein resides in the endosome membrane. It is found in the cytoplasmic vesicle. The protein localises to the cell projection. Its subcellular location is the dendrite. It localises to the presynaptic cell membrane. The protein resides in the synapse. It is found in the synaptosome. The protein localises to the mitochondrion. Its subcellular location is the membrane. It localises to the cell membrane. The protein resides in the perikaryon. It is found in the neuron projection. It carries out the reaction a 1,2-diacyl-sn-glycero-3-phospho-(1D-myo-inositol) + ATP = a 1,2-diacyl-sn-glycero-3-phospho-(1D-myo-inositol 4-phosphate) + ADP + H(+). Functionally, membrane-bound phosphatidylinositol-4 kinase (PI4-kinase) that catalyzes the phosphorylation of phosphatidylinositol (PI) to phosphatidylinositol 4-phosphate (PI4P), a lipid that plays important roles in endocytosis, Golgi function, protein sorting and membrane trafficking and is required for prolonged survival of neurons. Besides, phosphorylation of phosphatidylinositol (PI) to phosphatidylinositol 4-phosphate (PI4P) is the first committed step in the generation of phosphatidylinositol 4,5-bisphosphate (PIP2), a precursor of the second messenger inositol 1,4,5-trisphosphate (InsP3). The sequence is that of Phosphatidylinositol 4-kinase type 2-alpha (Pi4k2a) from Rattus norvegicus (Rat).